The primary structure comprises 226 residues: MPIMLEDYQKNFLELAIECQALRFGSFKLKSGRESPYFFNLGLFNTGKLLSNLATAYAIAIIQSDLKFDVIFGPAYKGIPLAAIVCVKLAEIGGSKFQNIQYAFNRKEAKDHGEGGIIVGSALENKRILIIDDVMTAGTAINEAFEIISNAKGQVVGSIIALDRQEVVSTDDKEGLSATQTVSKKYGIPVLSIVSLIHIITYLEGRITAEEKSKIEQYLQTYGASA.

A 5-phospho-alpha-D-ribose 1-diphosphate-binding site is contributed by Lys-30. 38 to 39 (FF) is a binding site for orotate. Residues 76–77 (YK), Arg-106, Lys-107, Lys-110, His-112, and 132–140 (DDVMTAGTA) contribute to the 5-phospho-alpha-D-ribose 1-diphosphate site. Thr-136 and Arg-164 together coordinate orotate. A phosphoserine mark is found at Ser-213 and Ser-225.

It belongs to the purine/pyrimidine phosphoribosyltransferase family. PyrE subfamily. As to quaternary structure, homodimer.

The catalysed reaction is orotidine 5'-phosphate + diphosphate = orotate + 5-phospho-alpha-D-ribose 1-diphosphate. The protein operates within pyrimidine metabolism; UMP biosynthesis via de novo pathway; UMP from orotate: step 1/2. Its function is as follows. Catalyzes the transfer of a ribosyl phosphate group from 5-phosphoribose 1-diphosphate to orotate, leading to the formation of orotidine monophosphate (OMP). In Saccharomyces cerevisiae (strain ATCC 204508 / S288c) (Baker's yeast), this protein is Orotate phosphoribosyltransferase 1 (URA5).